A 569-amino-acid chain; its full sequence is Potassium-transporting ATPase potassium-binding subunit (569 aa).

10 helical membrane passes run 11-31 (LLLA…ACVF), 64-84 (LAYT…LYGI), 135-155 (AGLA…ALAV), 179-199 (LYLL…MGIP), 258-278 (FNIL…GKMV), 285-305 (WALI…VYIA), 384-404 (GLYG…LMVG), 423-443 (MLAV…AAVL), 490-510 (LGIS…AIAG), and 531-551 (LFVG…YFPA).

The protein belongs to the KdpA family. The system is composed of three essential subunits: KdpA, KdpB and KdpC.

Its subcellular location is the cell inner membrane. Its function is as follows. Part of the high-affinity ATP-driven potassium transport (or Kdp) system, which catalyzes the hydrolysis of ATP coupled with the electrogenic transport of potassium into the cytoplasm. This subunit binds the periplasmic potassium ions and delivers the ions to the membrane domain of KdpB through an intramembrane tunnel. The sequence is that of Potassium-transporting ATPase potassium-binding subunit from Allorhizobium ampelinum (strain ATCC BAA-846 / DSM 112012 / S4) (Agrobacterium vitis (strain S4)).